Reading from the N-terminus, the 399-residue chain is MKRVILHCDLNNFYASVECLYHPELRDKPVAVCGSIEDRHGIVLAKNYAAKKYKVKTGETVWEAKNKCPGLVVVKANHSLYYKFSKYARQIYEYYTDRVESFGLDECWLDVSESTLLFGDGTKIANEIRERIKRELGVTVSVGVSYNKVFAKLGSDMKKPDAVTVITENDFKEKIWGLPVEALLYVGDSTKKKLNNMAVFTIGDLANCHSEFLVRQLGKWGYTLWSFANGYDTSPVAKNDCEIPIKSIGNSLTAPRDLTNNEDVRILIYVLSESVGERLRSHNLKGRTVQISIKDPELQTLERQAGLDIHTSITSEIAQKAYEIFLKSWNWSKNVRALGVRVTDLVESDTCTQISLFSDDIKRQKLEILDECVDRVRERFGYYSVRRGILLQDRGLNRI.

The UmuC domain occupies 5-187 (ILHCDLNNFY…LPVEALLYVG (183 aa)). 2 residues coordinate Mg(2+): Asp9 and Asp105. Glu106 is an active-site residue.

It belongs to the DNA polymerase type-Y family. As to quaternary structure, monomer. The cofactor is Mg(2+).

It is found in the cytoplasm. It carries out the reaction DNA(n) + a 2'-deoxyribonucleoside 5'-triphosphate = DNA(n+1) + diphosphate. Poorly processive, error-prone DNA polymerase involved in untargeted mutagenesis. Copies undamaged DNA at stalled replication forks, which arise in vivo from mismatched or misaligned primer ends. These misaligned primers can be extended by PolIV. Exhibits no 3'-5' exonuclease (proofreading) activity. May be involved in translesional synthesis, in conjunction with the beta clamp from PolIII. The chain is DNA polymerase IV from Acetivibrio thermocellus (strain ATCC 27405 / DSM 1237 / JCM 9322 / NBRC 103400 / NCIMB 10682 / NRRL B-4536 / VPI 7372) (Clostridium thermocellum).